The chain runs to 159 residues: 2-C-methyl-D-erythritol 2,4-cyclodiphosphate synthase (159 aa).

Asp-10 and His-12 together coordinate a divalent metal cation. Residues 10-12 (DVH) and 36-37 (HS) contribute to the 4-CDP-2-C-methyl-D-erythritol 2-phosphate site. Residue His-44 participates in a divalent metal cation binding. 4-CDP-2-C-methyl-D-erythritol 2-phosphate contacts are provided by residues 58 to 60 (DIG), 63 to 67 (FANTD), 134 to 137 (TTNE), and Arg-144.

It belongs to the IspF family. In terms of assembly, homotrimer. It depends on a divalent metal cation as a cofactor.

It catalyses the reaction 4-CDP-2-C-methyl-D-erythritol 2-phosphate = 2-C-methyl-D-erythritol 2,4-cyclic diphosphate + CMP. Its pathway is isoprenoid biosynthesis; isopentenyl diphosphate biosynthesis via DXP pathway; isopentenyl diphosphate from 1-deoxy-D-xylulose 5-phosphate: step 4/6. Its function is as follows. Involved in the biosynthesis of isopentenyl diphosphate (IPP) and dimethylallyl diphosphate (DMAPP), two major building blocks of isoprenoid compounds. Catalyzes the conversion of 4-diphosphocytidyl-2-C-methyl-D-erythritol 2-phosphate (CDP-ME2P) to 2-C-methyl-D-erythritol 2,4-cyclodiphosphate (ME-CPP) with a corresponding release of cytidine 5-monophosphate (CMP). In Cytophaga hutchinsonii (strain ATCC 33406 / DSM 1761 / CIP 103989 / NBRC 15051 / NCIMB 9469 / D465), this protein is 2-C-methyl-D-erythritol 2,4-cyclodiphosphate synthase.